We begin with the raw amino-acid sequence, 210 residues long: Probable transcriptional regulator ycf29 (210 aa).

One can recognise a Response regulatory domain in the interval Asn-3–Leu-119. Asp-52 carries the post-translational modification 4-aspartylphosphate. An HTH luxR-type domain is found at Ser-142–Asn-207.

It is found in the plastid. The protein localises to the cyanelle. The sequence is that of Probable transcriptional regulator ycf29 (ycf29) from Cyanophora paradoxa.